The chain runs to 186 residues: Mating-type-like protein ALPHA2 (186 aa).

The homeobox; TALE-type DNA-binding region spans 108 to 170 (ASYRGHRFTR…NRRRKQKSIY (63 aa)).

This sequence belongs to the TALE/M-ATYP homeobox family.

It is found in the nucleus. Its function is as follows. Mating type proteins are sequence specific DNA-binding proteins that act as master switches in yeast differentiation by controlling gene expression in a cell type-specific fashion. In Candida glabrata (strain ATCC 2001 / BCRC 20586 / JCM 3761 / NBRC 0622 / NRRL Y-65 / CBS 138) (Yeast), this protein is Mating-type-like protein ALPHA2 (MTL1ALPHA2).